Here is a 350-residue protein sequence, read N- to C-terminus: Outer membrane protein A (350 aa).

The N-terminal stretch at 1 to 21 is a signal peptide; that stretch reads MKKTAIAIAVALAGFATVAQA. The next 8 membrane-spanning stretches (beta stranded) occupy residues 27 to 37, 55 to 66, 70 to 78, 96 to 107, 112 to 120, 146 to 155, 160 to 167, and 186 to 194; these read TWYAGAKLGWS, QLGAGAFGGYQV, VGFEMGYDW, QGVQLTAKLGYP, LDVYTRLGG, PVFAGGIEYA, IATRLEYQ, and LLSVGVSYR. 4 consecutive repeat copies span residues 205 to 206, 207 to 208, 209 to 210, and 211 to 212. Residues 205–212 form a 4 X 2 AA tandem repeats of A-P region; that stretch reads APAPAPAP. One can recognise an OmpA-like domain in the interval 214–342; sequence VQTKHFTLKS…RVEIEVKGVK (129 aa). C315 and C327 are joined by a disulfide.

Belongs to the outer membrane OOP (TC 1.B.6) superfamily. OmpA family. Monomer and homodimer.

It localises to the cell outer membrane. Functionally, with TolR probably plays a role in maintaining the position of the peptidoglycan cell wall in the periplasm. Acts as a porin with low permeability that allows slow penetration of small solutes; an internal gate slows down solute passage. Its function is as follows. Required for conjugation with F-type plasmids; probably serves as the mating receptor on recipient cells. In Salmonella typhi, this protein is Outer membrane protein A.